The sequence spans 632 residues: U-box domain-containing protein 14 (632 aa).

The U-box domain maps to Val247–Glu321. ARM repeat units follow at residues Val377 to Ile416, Glu418 to Val457, Asp459 to Ile498, Gln500 to Thr539, and Gln541 to Ile580.

In terms of assembly, homodimer. Interacts with SNL1. Binds to SD11, SD16, SD17, SD18, SD113, SD129 and SD25. In terms of tissue distribution, expressed in flowers, green siliques, seeds and rosette leaves.

It carries out the reaction S-ubiquitinyl-[E2 ubiquitin-conjugating enzyme]-L-cysteine + [acceptor protein]-L-lysine = [E2 ubiquitin-conjugating enzyme]-L-cysteine + N(6)-ubiquitinyl-[acceptor protein]-L-lysine.. Its pathway is protein modification; protein ubiquitination. In terms of biological role, functions as an E3 ubiquitin ligase with specific E2 ubiquitin-conjugating enzymes. Undergoes auto-ubiquitination. This is U-box domain-containing protein 14 (PUB14) from Arabidopsis thaliana (Mouse-ear cress).